The chain runs to 227 residues: ATP-dependent dethiobiotin synthetase BioD (227 aa).

13-18 (DAGKTT) contacts ATP. Residue Thr17 participates in Mg(2+) binding. Lys38 is a catalytic residue. Residues Asp55, 118–121 (EGAG), 178–179 (NR), 207–209 (PYI), and Glu214 each bind ATP. Mg(2+) is bound by residues Asp55 and Glu118.

Belongs to the dethiobiotin synthetase family. In terms of assembly, homodimer. Mg(2+) is required as a cofactor.

Its subcellular location is the cytoplasm. It catalyses the reaction (7R,8S)-7,8-diammoniononanoate + CO2 + ATP = (4R,5S)-dethiobiotin + ADP + phosphate + 3 H(+). It functions in the pathway cofactor biosynthesis; biotin biosynthesis; biotin from 7,8-diaminononanoate: step 1/2. Its function is as follows. Catalyzes a mechanistically unusual reaction, the ATP-dependent insertion of CO2 between the N7 and N8 nitrogen atoms of 7,8-diaminopelargonic acid (DAPA, also called 7,8-diammoniononanoate) to form a ureido ring. This chain is ATP-dependent dethiobiotin synthetase BioD, found in Tolumonas auensis (strain DSM 9187 / NBRC 110442 / TA 4).